An 880-amino-acid chain; its full sequence is Alanine--tRNA ligase (880 aa).

Zn(2+) is bound by residues His-566, His-570, Cys-668, and His-672.

It belongs to the class-II aminoacyl-tRNA synthetase family. It depends on Zn(2+) as a cofactor.

The protein resides in the cytoplasm. The catalysed reaction is tRNA(Ala) + L-alanine + ATP = L-alanyl-tRNA(Ala) + AMP + diphosphate. Functionally, catalyzes the attachment of alanine to tRNA(Ala) in a two-step reaction: alanine is first activated by ATP to form Ala-AMP and then transferred to the acceptor end of tRNA(Ala). Also edits incorrectly charged Ser-tRNA(Ala) and Gly-tRNA(Ala) via its editing domain. In Alkaliphilus oremlandii (strain OhILAs) (Clostridium oremlandii (strain OhILAs)), this protein is Alanine--tRNA ligase.